The following is a 310-amino-acid chain: Protoheme IX farnesyltransferase (310 aa).

9 helical membrane passes run 26-45, 49-71, 95-115, 118-138, 147-167, 174-194, 220-240, 243-263, and 289-309; these read VMSL…PVTV, IALT…NMWW, GEAL…LGLA, LFAA…YSMW, IVIG…VATG, LFMF…LALF, VLVY…TGIG, LYLA…VRIW, and LFLH…GLGG.

It belongs to the UbiA prenyltransferase family. Protoheme IX farnesyltransferase subfamily. Interacts with CtaA.

The protein resides in the cell inner membrane. It catalyses the reaction heme b + (2E,6E)-farnesyl diphosphate + H2O = Fe(II)-heme o + diphosphate. Its pathway is porphyrin-containing compound metabolism; heme O biosynthesis; heme O from protoheme: step 1/1. Its function is as follows. Converts heme B (protoheme IX) to heme O by substitution of the vinyl group on carbon 2 of heme B porphyrin ring with a hydroxyethyl farnesyl side group. This Cereibacter sphaeroides (strain ATCC 17029 / ATH 2.4.9) (Rhodobacter sphaeroides) protein is Protoheme IX farnesyltransferase.